A 227-amino-acid chain; its full sequence is MAYPAQMGFQDATSPIMEELLYFHDHTLMIVFMISSLVLYTISLMLTTSLTHTNTMNAQEVETVWTILPAIICILIALPSLRILYMMDEINNPSLTIKTMGHQWYWTYEYTDYENMTFDSYMTSTNDLTPGELRLLEVDNRMVLPTELPIRVLVSSEDVLHSWTVPSLGLKTDAIPGRLNQTTLMASRPGLYYGQCSEICGANHSFMPIVLELIPLKYFEKWLLTML.

Topologically, residues 1–14 are mitochondrial intermembrane; it reads MAYPAQMGFQDATS. The chain crosses the membrane as a helical span at residues 15 to 45; that stretch reads PIMEELLYFHDHTLMIVFMISSLVLYTISLM. The Mitochondrial matrix segment spans residues 46 to 59; that stretch reads LTTSLTHTNTMNAQ. The helical transmembrane segment at 60–87 threads the bilayer; sequence EVETVWTILPAIICILIALPSLRILYMM. Topologically, residues 88 to 227 are mitochondrial intermembrane; the sequence is DEINNPSLTI…YFEKWLLTML (140 aa). His-161, Cys-196, Glu-198, Cys-200, His-204, and Met-207 together coordinate Cu cation. Residue Glu-198 coordinates Mg(2+). Tyr-218 is subject to Phosphotyrosine.

The protein belongs to the cytochrome c oxidase subunit 2 family. In terms of assembly, component of the cytochrome c oxidase (complex IV, CIV), a multisubunit enzyme composed of 14 subunits. The complex is composed of a catalytic core of 3 subunits MT-CO1, MT-CO2 and MT-CO3, encoded in the mitochondrial DNA, and 11 supernumerary subunits COX4I, COX5A, COX5B, COX6A, COX6B, COX6C, COX7A, COX7B, COX7C, COX8 and NDUFA4, which are encoded in the nuclear genome. The complex exists as a monomer or a dimer and forms supercomplexes (SCs) in the inner mitochondrial membrane with NADH-ubiquinone oxidoreductase (complex I, CI) and ubiquinol-cytochrome c oxidoreductase (cytochrome b-c1 complex, complex III, CIII), resulting in different assemblies (supercomplex SCI(1)III(2)IV(1) and megacomplex MCI(2)III(2)IV(2)). Found in a complex with TMEM177, COA6, COX18, COX20, SCO1 and SCO2. Interacts with TMEM177 in a COX20-dependent manner. Interacts with COX20. Interacts with COX16. Cu cation is required as a cofactor.

It localises to the mitochondrion inner membrane. It carries out the reaction 4 Fe(II)-[cytochrome c] + O2 + 8 H(+)(in) = 4 Fe(III)-[cytochrome c] + 2 H2O + 4 H(+)(out). Component of the cytochrome c oxidase, the last enzyme in the mitochondrial electron transport chain which drives oxidative phosphorylation. The respiratory chain contains 3 multisubunit complexes succinate dehydrogenase (complex II, CII), ubiquinol-cytochrome c oxidoreductase (cytochrome b-c1 complex, complex III, CIII) and cytochrome c oxidase (complex IV, CIV), that cooperate to transfer electrons derived from NADH and succinate to molecular oxygen, creating an electrochemical gradient over the inner membrane that drives transmembrane transport and the ATP synthase. Cytochrome c oxidase is the component of the respiratory chain that catalyzes the reduction of oxygen to water. Electrons originating from reduced cytochrome c in the intermembrane space (IMS) are transferred via the dinuclear copper A center (CU(A)) of subunit 2 and heme A of subunit 1 to the active site in subunit 1, a binuclear center (BNC) formed by heme A3 and copper B (CU(B)). The BNC reduces molecular oxygen to 2 water molecules using 4 electrons from cytochrome c in the IMS and 4 protons from the mitochondrial matrix. The sequence is that of Cytochrome c oxidase subunit 2 (MT-CO2) from Daubentonia madagascariensis (Aye-aye).